The primary structure comprises 456 residues: Histidine--tRNA ligase (456 aa).

The protein belongs to the class-II aminoacyl-tRNA synthetase family. Homodimer.

It localises to the cytoplasm. The catalysed reaction is tRNA(His) + L-histidine + ATP = L-histidyl-tRNA(His) + AMP + diphosphate + H(+). The protein is Histidine--tRNA ligase of Christiangramia forsetii (strain DSM 17595 / CGMCC 1.15422 / KT0803) (Gramella forsetii).